The chain runs to 474 residues: Mercuric reductase (474 aa).

FAD-binding residues include A19, G39, and T44. C45 and C50 are oxidised to a cystine. 4 residues coordinate FAD: K54, A119, D315, and V323. Positions 471 and 472 each coordinate Hg(2+).

The protein belongs to the class-I pyridine nucleotide-disulfide oxidoreductase family. As to quaternary structure, homodimer. Requires FAD as cofactor.

It catalyses the reaction Hg + NADP(+) + H(+) = Hg(2+) + NADPH. Its function is as follows. Resistance to Hg(2+) in bacteria appears to be governed by a specialized system which includes mercuric reductase. MerA protein is responsible for volatilizing mercury as Hg(0). This Streptomyces lividans protein is Mercuric reductase (merA).